The chain runs to 501 residues: Carotenoid cleavage oxygenase (501 aa).

4 residues coordinate Fe cation: H162, H211, H314, and H494.

The protein belongs to the carotenoid oxygenase family. Fe(2+) serves as cofactor.

Catalyzes the oxidative cleavage of several carotenoids and apocarotenoids in vitro. The polypeptide is Carotenoid cleavage oxygenase (Mycobacterium tuberculosis (strain CDC 1551 / Oshkosh)).